The sequence spans 544 residues: Chaperonin GroEL (544 aa).

ATP-binding positions include 30–33 (TLGP), Lys-51, 87–91 (DGTTT), Gly-415, 481–483 (DAL), and Asp-497.

It belongs to the chaperonin (HSP60) family. In terms of assembly, forms a cylinder of 14 subunits composed of two heptameric rings stacked back-to-back. Interacts with the co-chaperonin GroES.

The protein localises to the cytoplasm. It carries out the reaction ATP + H2O + a folded polypeptide = ADP + phosphate + an unfolded polypeptide.. Together with its co-chaperonin GroES, plays an essential role in assisting protein folding. The GroEL-GroES system forms a nano-cage that allows encapsulation of the non-native substrate proteins and provides a physical environment optimized to promote and accelerate protein folding. This is Chaperonin GroEL from Chlamydia trachomatis serovar L2 (strain ATCC VR-902B / DSM 19102 / 434/Bu).